The primary structure comprises 203 residues: Small ribosomal subunit protein uS4c (203 aa).

Positions 19-43 (PGLTNKSPKAGSDLRKQPRSRKKSQ) are disordered. Positions 89 to 152 (MRLDNILFRL…KSRTLIQNSL (64 aa)) constitute an S4 RNA-binding domain.

The protein belongs to the universal ribosomal protein uS4 family. As to quaternary structure, part of the 30S ribosomal subunit. Contacts protein S5. The interaction surface between S4 and S5 is involved in control of translational fidelity.

The protein localises to the plastid. Its subcellular location is the chloroplast. Its function is as follows. One of the primary rRNA binding proteins, it binds directly to 16S rRNA where it nucleates assembly of the body of the 30S subunit. Functionally, with S5 and S12 plays an important role in translational accuracy. This Jasminum nudiflorum (Winter jasmine) protein is Small ribosomal subunit protein uS4c (rps4).